The sequence spans 1035 residues: FERM domain-containing protein 4B (1035 aa).

Residues 59–361 (RHCQVHLLDD…SQHQFYLDRK (303 aa)) enclose the FERM domain. Serine 372 carries the phosphoserine modification. Coiled coils occupy residues 414–451 (QDSE…LKKI) and 535–559 (KQDY…RIRC). The tract at residues 542-972 (VKRLQEIENS…TQLTIGLSEY (431 aa)) is necessary for adherens junction and tight junction localization. Disordered stretches follow at residues 563-615 (PSQK…ILPP), 631-699 (NEQF…LESQ), 713-738 (FTLS…SQSS), and 754-798 (TQTL…SKGQ). Low complexity predominate over residues 571 to 590 (PPEDIIPSESSSLSDTTTYD). Positions 594-607 (DSFTLAGQRPSSVP) are enriched in polar residues. Serine 609 bears the Phosphoserine mark. Over residues 635-644 (MDTRHSREML) the composition is skewed to basic and acidic residues. Composition is skewed to polar residues over residues 664 to 699 (MPTT…LESQ) and 715 to 725 (LSKSQRSSSTE). Serine 698 is modified (phosphoserine). The segment covering 762-771 (RGRRRSKKHS) has biased composition (basic residues). The span at 772–782 (VSTSNSGSMPN) shows a compositional bias: polar residues. Lysine 883 is covalently cross-linked (Glycyl lysine isopeptide (Lys-Gly) (interchain with G-Cter in SUMO2)). 3 disordered regions span residues 906-926 (RASG…SDRG), 939-958 (PCSP…TNAS), and 994-1035 (PSRQ…GTLV). Over residues 907–921 (ASGQKDQGHSPQTSF) the composition is skewed to polar residues. Residue serine 916 is modified to Phosphoserine. Residues 941-958 (SPSSRASSYSSVSSTNAS) show a composition bias toward low complexity. Basic and acidic residues predominate over residues 1019 to 1035 (SEQRLFWHEDSKPGTLV). Lysine 1030 is covalently cross-linked (Glycyl lysine isopeptide (Lys-Gly) (interchain with G-Cter in SUMO2)).

Interacts with CYTH3. Interacts with PARD3. Interacts with CYTH1. As to expression, isoform 1 is expressed in the brain. Isoform 2 is expressed in the lung (at protein level).

The protein localises to the cytoplasm. The protein resides in the cytoskeleton. It localises to the cell junction. Its subcellular location is the tight junction. It is found in the adherens junction. Its function is as follows. Member of GRP1 signaling complexes that are acutely recruited to plasma membrane ruffles in response to insulin receptor signaling. May function as a scaffolding protein that regulates epithelial cell polarity by connecting ARF6 activation with the PAR3 complex. Plays a redundant role with FRMD4A in epithelial polarization. The polypeptide is FERM domain-containing protein 4B (Frmd4b) (Mus musculus (Mouse)).